Consider the following 148-residue polypeptide: U5-hexatoxin-Hi1a (148 aa).

A signal peptide spans 1–21 (MNFSVVAVALVVVLTVHFTDG). Positions 22–38 (QETSSSLPSPPSPLPGR) are excised as a propeptide. Residues 125-148 (TPSTTVTTPTPTTETPTTETPSTP) are disordered.

In terms of processing, contains 2 disulfide bonds. Expressed by the venom gland.

The protein localises to the secreted. Probable ion channel inhibitor. The sequence is that of U5-hexatoxin-Hi1a from Hadronyche infensa (Fraser island funnel-web spider).